The following is a 208-amino-acid chain: Uracil phosphoribosyltransferase (208 aa).

Residues arginine 78, arginine 103, and 130–138 each bind 5-phospho-alpha-D-ribose 1-diphosphate; that span reads DPMLATGGS. Residues isoleucine 193 and 198–200 each bind uracil; that span reads GDA. Aspartate 199 lines the 5-phospho-alpha-D-ribose 1-diphosphate pocket.

Belongs to the UPRTase family. Mg(2+) serves as cofactor.

It carries out the reaction UMP + diphosphate = 5-phospho-alpha-D-ribose 1-diphosphate + uracil. Its pathway is pyrimidine metabolism; UMP biosynthesis via salvage pathway; UMP from uracil: step 1/1. Allosterically activated by GTP. In terms of biological role, catalyzes the conversion of uracil and 5-phospho-alpha-D-ribose 1-diphosphate (PRPP) to UMP and diphosphate. The polypeptide is Uracil phosphoribosyltransferase (Blochmanniella pennsylvanica (strain BPEN)).